A 475-amino-acid chain; its full sequence is Argininosuccinate lyase (475 aa).

It belongs to the lyase 1 family. Argininosuccinate lyase subfamily.

It is found in the cytoplasm. It carries out the reaction 2-(N(omega)-L-arginino)succinate = fumarate + L-arginine. It participates in amino-acid biosynthesis; L-arginine biosynthesis; L-arginine from L-ornithine and carbamoyl phosphate: step 3/3. In Streptomyces griseus subsp. griseus (strain JCM 4626 / CBS 651.72 / NBRC 13350 / KCC S-0626 / ISP 5235), this protein is Argininosuccinate lyase.